The primary structure comprises 686 residues: Acyl-CoA synthetase short-chain family member 3, mitochondrial (686 aa).

A mitochondrion-targeting transit peptide spans 1–29 (MKPSWLQCRKVTGAGGLGGSLPASSPARG). A CoA-binding site is contributed by 226-229 (EPGR). ATP contacts are provided by residues 424 to 426 (GER) and 445 to 450 (DHWWQT). Lysine 517 carries the N6-succinyllysine modification. An N6-acetyllysine modification is found at lysine 523. ATP-binding residues include aspartate 538, arginine 553, and arginine 564. Arginine 623 contributes to the CoA binding site.

The protein belongs to the ATP-dependent AMP-binding enzyme family.

It is found in the mitochondrion matrix. The catalysed reaction is acetate + ATP + CoA = acetyl-CoA + AMP + diphosphate. The enzyme catalyses propanoate + ATP + CoA = propanoyl-CoA + AMP + diphosphate. It catalyses the reaction butanoate + ATP + CoA = butanoyl-CoA + AMP + diphosphate. Catalyzes the synthesis of acetyl-CoA from short-chain fatty acids. Propionate is the preferred substrate but can also utilize acetate and butyrate with a much lower affinity. The protein is Acyl-CoA synthetase short-chain family member 3, mitochondrial (ACSS3) of Bos taurus (Bovine).